Here is a 208-residue protein sequence, read N- to C-terminus: MALGQKLFITMSRGAGRLQGTLWALVFLGILVGMVVPSPAGTRANNTLLDSRGWGTLLSRSRAGLAGEIAGVNWESGYLVGIKRQRRLYCNVGIGFHLQVLPDGRISGTHEENPYSLLEISTVERGVVSLFGVRSALFVAMNSKGRLYATPSFQEECKFRETLLPNNYNAYESDLYQGTYIALSKYGRVKRGSKVSPIMTVTHFLPRI.

Residues Met-1 to Pro-37 form the signal peptide. N-linked (GlcNAc...) asparagine glycosylation is present at Asn-45. Cys-90 and Cys-157 form a disulfide bridge.

It belongs to the heparin-binding growth factors family. Interacts with FGFR1, FGFR2 and FGFR4. Affinity between fibroblast growth factors (FGFs) and their receptors is increased by heparan sulfate glycosaminoglycans that function as coreceptors. Leukemia cell lines with platelet/ megakaryocytic differentiation potential.

Its subcellular location is the secreted. The protein resides in the extracellular space. Plays an important role in the regulation of cell proliferation, cell differentiation, angiogenesis and myogenesis, and is required for normal muscle regeneration. This chain is Fibroblast growth factor 6 (FGF6), found in Homo sapiens (Human).